The sequence spans 440 residues: Glutamyl-tRNA(Gln) amidotransferase subunit D (440 aa).

The 331-residue stretch at 94–424 (PSVTILGTGG…KEVRRMMLTN (331 aa)) folds into the Asparaginase/glutaminase domain. Active-site residues include Thr104, Thr180, Asp181, and Lys258.

Belongs to the asparaginase 1 family. GatD subfamily. In terms of assembly, heterodimer of GatD and GatE.

The enzyme catalyses L-glutamyl-tRNA(Gln) + L-glutamine + ATP + H2O = L-glutaminyl-tRNA(Gln) + L-glutamate + ADP + phosphate + H(+). Functionally, allows the formation of correctly charged Gln-tRNA(Gln) through the transamidation of misacylated Glu-tRNA(Gln) in organisms which lack glutaminyl-tRNA synthetase. The reaction takes place in the presence of glutamine and ATP through an activated gamma-phospho-Glu-tRNA(Gln). The GatDE system is specific for glutamate and does not act on aspartate. The protein is Glutamyl-tRNA(Gln) amidotransferase subunit D of Thermococcus kodakarensis (strain ATCC BAA-918 / JCM 12380 / KOD1) (Pyrococcus kodakaraensis (strain KOD1)).